A 251-amino-acid polypeptide reads, in one-letter code: ATP synthase subunit a (251 aa).

Helical transmembrane passes span 29 to 49, 56 to 73, 87 to 107, 117 to 137, 159 to 181, 192 to 212, and 218 to 238; these read FTQSALYMFAAVGIIALITLV, LVPGRMQSLAEAFYEFIA, FVPLVFSLFMFVLVLNLFGMI, IIVTFMLALVVILTVVIYGFM, LIVAIEVVSFISRPISLSVRLFA, IFAGFVPALLAAGIWGILSPL, and VAITALEMLVAVLQAYVFATL.

The protein belongs to the ATPase A chain family. In terms of assembly, F-type ATPases have 2 components, CF(1) - the catalytic core - and CF(0) - the membrane proton channel. CF(1) has five subunits: alpha(3), beta(3), gamma(1), delta(1), epsilon(1). CF(0) has three main subunits: a(1), b(2) and c(9-12). The alpha and beta chains form an alternating ring which encloses part of the gamma chain. CF(1) is attached to CF(0) by a central stalk formed by the gamma and epsilon chains, while a peripheral stalk is formed by the delta and b chains.

The protein localises to the cell inner membrane. Key component of the proton channel; it plays a direct role in the translocation of protons across the membrane. The chain is ATP synthase subunit a from Methylobacterium sp. (strain 4-46).